The primary structure comprises 158 residues: NAD(P)H-quinone oxidoreductase subunit J, chloroplastic (158 aa).

Belongs to the complex I 30 kDa subunit family. As to quaternary structure, NDH is composed of at least 16 different subunits, 5 of which are encoded in the nucleus.

The protein resides in the plastid. Its subcellular location is the chloroplast thylakoid membrane. The catalysed reaction is a plastoquinone + NADH + (n+1) H(+)(in) = a plastoquinol + NAD(+) + n H(+)(out). The enzyme catalyses a plastoquinone + NADPH + (n+1) H(+)(in) = a plastoquinol + NADP(+) + n H(+)(out). Its function is as follows. NDH shuttles electrons from NAD(P)H:plastoquinone, via FMN and iron-sulfur (Fe-S) centers, to quinones in the photosynthetic chain and possibly in a chloroplast respiratory chain. The immediate electron acceptor for the enzyme in this species is believed to be plastoquinone. Couples the redox reaction to proton translocation, and thus conserves the redox energy in a proton gradient. The protein is NAD(P)H-quinone oxidoreductase subunit J, chloroplastic of Ceratophyllum demersum (Rigid hornwort).